A 1274-amino-acid chain; its full sequence is DENN domain-containing protein 3 (1274 aa).

Residues 65-108 are disordered; sequence GQVPGASCALGKGRRRSFRKKREKPRMEPWKSHPGDSKGPDSED. The 171-residue stretch at 75-245 folds into the uDENN domain; that stretch reads GKGRRRSFRK…LIPSPPPGPL (171 aa). Residues 76-88 show a composition bias toward basic residues; sequence KGRRRSFRKKREK. Over residues 89–105 the composition is skewed to basic and acidic residues; that stretch reads PRMEPWKSHPGDSKGPD. Residues 268-400 form the cDENN domain; sequence IVDLDLHLPL…PLLLAQTFIQ (133 aa). The 105-residue stretch at 402 to 506 folds into the dDENN domain; the sequence is VQSLQLHPDL…KARLNGRMDA (105 aa). Residues 520-970 form a linker region; the sequence is RIDRMLISPR…KHKINPSAGE (451 aa). 2 positions are modified to phosphoserine; by ULK1: Ser-554 and Ser-572. Tyr-940 carries the post-translational modification Phosphotyrosine. WD repeat units lie at residues 975–1013, 1019–1055, 1059–1099, 1103–1140, 1146–1181, 1186–1228, and 1234–1273; these read AIEV…VFDA, HQHC…IINV, SCNK…AWNV, RVIS…TPQG, LKHP…MWSL, QPPQ…IYVM, and TVEK…IWKV.

In terms of assembly, forms oligomers. Interacts with 6 of the 7 known isoforms of 14-3-3 proteins.

It localises to the cytoplasm. Its function is as follows. Guanine nucleotide exchange factor (GEF) activating Rab12. Promotes the exchange of GDP to GTP, converting inactive GDP-bound Rab12 into its active GTP-bound form. Regulates autophagy in response to starvation through Rab12 activation. Starvation leads to ULK1/2-dependent phosphorylation of Ser-554 and Ser-572, which in turn allows recruitment of 14-3-3 adapter proteins and leads to up-regulation of GEF activity towards Rab12. Also plays a role in protein transport from recycling endosomes to lysosomes, regulating, for instance, the degradation of the transferrin receptor and of the amino acid transporter PAT4. Starvation also induces phosphorylation at Tyr-940, which leads to up-regulated GEF activity and initiates autophagy. This chain is DENN domain-containing protein 3 (Dennd3), found in Mus musculus (Mouse).